Here is a 246-residue protein sequence, read N- to C-terminus: Acetoacetate decarboxylase (246 aa).

The active-site Schiff-base intermediate with acetoacetate is lysine 116.

Belongs to the ADC family.

It carries out the reaction acetoacetate + H(+) = acetone + CO2. Its function is as follows. Catalyzes the conversion of acetoacetate to acetone and carbon dioxide. In Burkholderia multivorans (strain ATCC 17616 / 249), this protein is Acetoacetate decarboxylase.